A 465-amino-acid polypeptide reads, in one-letter code: Cysteine--tRNA ligase 2 (465 aa).

Cys-30 is a Zn(2+) binding site. The short motif at 32-42 is the 'HIGH' region element; the sequence is ITVYDYCHVGH. Residues Cys-214, His-239, and Glu-243 each coordinate Zn(2+). The short motif at 271 to 275 is the 'KMSKS' region element; that stretch reads KMSKS. Lys-274 is an ATP binding site.

It belongs to the class-I aminoacyl-tRNA synthetase family. Monomer. Requires Zn(2+) as cofactor.

Its subcellular location is the cytoplasm. It carries out the reaction tRNA(Cys) + L-cysteine + ATP = L-cysteinyl-tRNA(Cys) + AMP + diphosphate. This is Cysteine--tRNA ligase 2 from Burkholderia lata (strain ATCC 17760 / DSM 23089 / LMG 22485 / NCIMB 9086 / R18194 / 383).